We begin with the raw amino-acid sequence, 538 residues long: Syncytin-1 (538 aa).

An N-terminal signal peptide occupies residues 1–20 (MALPYHIFLFTVLLPSFTLT). Over 21–443 (APPPCRCMTS…NTGPWGLLSQ (423 aa)) the chain is Extracellular. An N-linked (GlcNAc...) asparagine glycan is attached at N169. A CXXC motif is present at residues 186-189 (CWIC). 3 cysteine pairs are disulfide-bonded: C186-C189, C186-C405, and C397-C404. N208, N214, N234, N242, and N281 each carry an N-linked (GlcNAc...) asparagine glycan. Positions 320–340 (ILPFVIGAGVLGALGTGIGGI) are fusion peptide. The interval 380–396 (LQNRRALDLLTAERGGT) is immunosuppression. The CX6CC signature appears at 397–406 (CLFLGEECCY). The N-linked (GlcNAc...) asparagine glycan is linked to N409. Residues 444–464 (WMPWILPFLGPLAAIILLLLF) form a helical membrane-spanning segment. The segment at 465-484 (GPCIFNLLVNFVSSRIEAVK) is essential for the fusiogenic function. The Cytoplasmic portion of the chain corresponds to 465-538 (GPCIFNLLVN…LLRPNSAGSS (74 aa)). The disordered stretch occupies residues 496–538 (KIYRRPLDRPASPRSDVNDIKGTPPEEISAAQPLLRPNSAGSS).

The protein belongs to the gamma type-C retroviral envelope protein family. HERV class-I W env subfamily. The mature envelope protein (Env) consists of a trimer of SU-TM heterodimers attached probably by a labile interchain disulfide bond. Interacts with the C-type lectin CD209/DC-SIGN. Specific enzymatic cleavages in vivo yield mature proteins. Envelope glycoproteins are synthesized as an inactive precursor that is heavily N-glycosylated and processed likely by furin in the Golgi to yield the mature SU and TM proteins. The cleavage site between SU and TM requires the minimal sequence [KR]-X-[KR]-R. The intracytoplasmic tail cleavage by the viral protease that is required for the fusiogenic activity of some retroviruses envelope proteins seems to have been lost during evolution. In terms of processing, the CXXC motif is highly conserved across a broad range of retroviral envelope proteins. It is thought to participate in the formation of a labile disulfide bond possibly with the CX6CC motif present in the transmembrane protein. Isomerization of the intersubunit disulfide bond to an SU intrachain disulfide bond is thought to occur upon receptor recognition in order to allow membrane fusion. In terms of tissue distribution, expressed at higher level in placental syncytiotrophoblast. Expressed at intermediate level in testis. Seems also to be found at low level in adrenal tissue, bone marrow, breast, colon, kidney, ovary, prostate, skin, spleen, thymus, thyroid, brain and trachea. Both mRNA and protein levels are significantly increased in the brain of individuals with multiple sclerosis, particularly in astrocytes and microglia.

The protein localises to the cell membrane. It localises to the virion. This endogenous retroviral envelope protein has retained its original fusogenic properties and participates in trophoblast fusion and the formation of a syncytium during placenta morphogenesis. May induce fusion through binding of SLC1A4 and SLC1A5. Functionally, endogenous envelope proteins may have kept, lost or modified their original function during evolution. Retroviral envelope proteins mediate receptor recognition and membrane fusion during early infection. The surface protein (SU) mediates receptor recognition, while the transmembrane protein (TM) acts as a class I viral fusion protein. The protein may have at least 3 conformational states: pre-fusion native state, pre-hairpin intermediate state, and post-fusion hairpin state. During viral and target cell membrane fusion, the coiled coil regions (heptad repeats) assume a trimer-of-hairpins structure, positioning the fusion peptide in close proximity to the C-terminal region of the ectodomain. The formation of this structure appears to drive apposition and subsequent fusion of membranes. The protein is Syncytin-1 (ERVW-1) of Homo sapiens (Human).